The primary structure comprises 144 residues: UPF0102 protein BURPS668_3819 (144 aa).

Residues 1 to 28 form a disordered region; that stretch reads MCHAREASLGTGEPEAAPRDNFPREAGS. Basic and acidic residues predominate over residues 16-28; that stretch reads AAPRDNFPREAGS.

The protein belongs to the UPF0102 family.

This is UPF0102 protein BURPS668_3819 from Burkholderia pseudomallei (strain 668).